We begin with the raw amino-acid sequence, 321 residues long: Cytochrome f (321 aa).

Positions 1 to 38 (MKKNFYTISKTMSRSLKLILFSVFIGFSIFLIPQPTWA) are cleaved as a signal peptide. Residues tyrosine 39, cysteine 59, cysteine 62, and histidine 63 each coordinate heme. A helical transmembrane segment spans residues 288–308 (VIGMIIFFIGVGLSQIMLVLK).

It belongs to the cytochrome f family. The 4 large subunits of the cytochrome b6-f complex are cytochrome b6, subunit IV (17 kDa polypeptide, PetD), cytochrome f and the Rieske protein, while the 4 small subunits are PetG, PetL, PetM and PetN. The complex functions as a dimer. It depends on heme as a cofactor.

The protein resides in the cellular thylakoid membrane. In terms of biological role, component of the cytochrome b6-f complex, which mediates electron transfer between photosystem II (PSII) and photosystem I (PSI), cyclic electron flow around PSI, and state transitions. The polypeptide is Cytochrome f (Prochlorococcus marinus (strain NATL2A)).